The sequence spans 99 residues: Integration host factor subunit alpha (99 aa).

Belongs to the bacterial histone-like protein family. In terms of assembly, heterodimer of an alpha and a beta chain.

In terms of biological role, this protein is one of the two subunits of integration host factor, a specific DNA-binding protein that functions in genetic recombination as well as in transcriptional and translational control. The sequence is that of Integration host factor subunit alpha (ihfA) from Mannheimia haemolytica (Pasteurella haemolytica).